The chain runs to 147 residues: Hemoglobin subunit delta (147 aa).

Positions 3–147 constitute a Globin domain; the sequence is HLTPDEKNAV…VATALAHKYH (145 aa). Ser-51 is modified (phosphoserine). Heme b contacts are provided by His-64 and His-93.

This sequence belongs to the globin family. In terms of assembly, heterotetramer of two delta chains and two alpha chains. In terms of tissue distribution, red blood cells.

In Otolemur crassicaudatus (Brown greater galago), this protein is Hemoglobin subunit delta (HBD).